Reading from the N-terminus, the 232-residue chain is Vesicle transport through interaction with t-SNAREs homolog 1B (232 aa).

Ala2 is subject to N-acetylalanine. Interaction with CLINT1 stretches follow at residues 2 to 23 and 69 to 73; these read ASSA…GLHE and APLSF. The Cytoplasmic segment spans residues 2–208; the sequence is ASSAASSEHF…SRKVTTNKLL (207 aa). The stretch at 35-98 forms a coiled coil; that stretch reads TAGTEEKKKL…AKLHREVRST (64 aa). Thr103 is modified (phosphothreonine). Omega-N-methylarginine is present on Arg107. Position 138 is a phosphoserine (Ser138). Positions 161–198 form a coiled coil; that stretch reads SEIIEELGEQRDQLERTKSRLVNTSENLSKSRKILRSM. Residues 209-229 form a helical; Anchor for type IV membrane protein membrane-spanning segment; sequence LSIIILLELAILGGLVYYKFF. At 230–232 the chain is on the vesicular side; sequence RSH.

Belongs to the VTI1 family. As to quaternary structure, forms a SNARE complex with STX7, STX8 and VAMP8 which functions in the homotypic fusion of late endosomes. Component of the SNARE complex composed of STX7, STX8, VAMP7 and VIT1B that is required for heterotypic fusion of late endosomes with lysosomes. May interact with STX17. Interacts with CLINT1. In terms of tissue distribution, expressed in all tissues examined.

The protein localises to the early endosome membrane. It localises to the late endosome membrane. Its subcellular location is the lysosome membrane. The protein resides in the cytoplasmic granule. It is found in the recycling endosome membrane. Its function is as follows. V-SNARE that mediates vesicle transport pathways through interactions with t-SNAREs on the target membrane. These interactions are proposed to mediate aspects of the specificity of vesicle trafficking and to promote fusion of the lipid bilayers. May be concerned with increased secretion of cytokines associated with cellular senescence. In Homo sapiens (Human), this protein is Vesicle transport through interaction with t-SNAREs homolog 1B (VTI1B).